Here is a 204-residue protein sequence, read N- to C-terminus: uncharacterized protein (204 aa).

Positions 1-24 are cleaved as a signal peptide; it reads MPINTFCKISLFICALFCSTVTLA.

This is an uncharacterized protein from Pasteurella multocida (strain Pm70).